The primary structure comprises 1031 residues: Ookinete maturation protein 1 (1031 aa).

Disordered regions lie at residues 125-184, 340-405, and 609-697; these read HNEN…PELE, KEAE…DGMR, and DAEL…NDSI. Residues 141–168 show a composition bias toward basic residues; it reads QKLKKKKKIKKGTKKKSINKISILKHKS. Residues 171 to 180 show a composition bias toward polar residues; it reads SFPSTQNENT. Positions 340 to 357 are enriched in basic and acidic residues; it reads KEAEEEERKKNEDEHILE. The segment covering 377 to 394 has biased composition (polar residues); the sequence is LGKSFKNNESFELNSPQK. Positions 581–646 form a coiled coil; it reads IDEENSVFVE…ETQMAGKEEK (66 aa). Residues 610–648 are compositionally biased toward basic and acidic residues; that stretch reads AELRKDEEEDKSKNNEKDSKSEERDILETQMAGKEEKPV. Basic residues predominate over residues 649–659; that stretch reads LKKKKKNKGKQ. A compositionally biased stretch (basic and acidic residues) spans 660–686; it reads RNREGKGVVEKGYDAKREKKENEEKNK.

In the mosquito vector midgut, plays a role in ookinete development. The protein is Ookinete maturation protein 1 of Plasmodium berghei (strain Anka).